We begin with the raw amino-acid sequence, 84 residues long: Anthracycline acyl carrier protein DpsG (84 aa).

Positions 3–80 (ELSLAELREI…SMLIFVNERL (78 aa)) constitute a Carrier domain. Serine 40 carries the O-(pantetheine 4'-phosphoryl)serine modification.

It functions in the pathway antibiotic biosynthesis; daunorubicin biosynthesis. It participates in antibiotic biosynthesis; carminomycin biosynthesis. The protein operates within antibiotic biosynthesis; rhodomycin biosynthesis. Its pathway is antibiotic biosynthesis; aclacinomycin biosynthesis. Involved in the biosynthesis of aklanonate which is an important precursor common to the formation of the clinically significant anthracyclines such as carminomycin, daunorubicin (daunomycin), rhodomycin, aclacinomycin T (aklavin) and aclacinomycin A (aclarubicin). These compounds are aromatic polyketide antibiotics that exhibit high cytotoxicity and are widely applied in the chemotherapy of a variety of cancers. In Streptomyces peucetius, this protein is Anthracycline acyl carrier protein DpsG (dpsG).